Reading from the N-terminus, the 135-residue chain is Small ribosomal subunit protein eS6 (135 aa).

It belongs to the eukaryotic ribosomal protein eS6 family.

In Halorubrum lacusprofundi (strain ATCC 49239 / DSM 5036 / JCM 8891 / ACAM 34), this protein is Small ribosomal subunit protein eS6.